Here is a 411-residue protein sequence, read N- to C-terminus: Lycopene beta cyclase (411 aa).

Residue 4-32 participates in NAD(+) binding; sequence ALVIGSGPAGLAIAAELAQRGLKVQGLSP.

The protein belongs to the lycopene cyclase family. The cofactor is FAD.

It catalyses the reaction a carotenoid psi-end group = a carotenoid beta-end derivative. The enzyme catalyses all-trans-lycopene = gamma-carotene. The catalysed reaction is gamma-carotene = all-trans-beta-carotene. It carries out the reaction all-trans-neurosporene = beta-zeacarotene. It participates in carotenoid biosynthesis; beta-carotene biosynthesis. The protein operates within carotenoid biosynthesis; beta-zeacarotene biosynthesis. Inhibited by the bleaching herbicide 2-(4-methylphenoxy)triethylamine hydrochloride (MPTA). In terms of biological role, catalyzes the double cyclization reaction which converts lycopene to beta-carotene. It also converts neurosporene to the monocyclic beta-zeacarotene but does not cyclize zeta-carotene. The chain is Lycopene beta cyclase from Synechococcus elongatus (strain ATCC 33912 / PCC 7942 / FACHB-805) (Anacystis nidulans R2).